Reading from the N-terminus, the 242-residue chain is NAD-dependent protein deacetylase (242 aa).

Positions Met1 to Lys242 constitute a Deacetylase sirtuin-type domain. NAD(+) contacts are provided by Ala23, Thr27, Phe34, Arg35, Gln102, Ile104, Asp105, and His120. Position 34 (Phe34) interacts with nicotinamide. Ile104 and Asp105 together coordinate nicotinamide. Residue His120 is the Proton acceptor of the active site. Cys128, Cys131, Cys148, and Cys151 together coordinate Zn(2+). The NAD(+) site is built by Thr187, Ser188, Asn213, and Ile231.

It belongs to the sirtuin family. Class U subfamily. It depends on Zn(2+) as a cofactor.

It is found in the cytoplasm. The enzyme catalyses N(6)-acetyl-L-lysyl-[protein] + NAD(+) + H2O = 2''-O-acetyl-ADP-D-ribose + nicotinamide + L-lysyl-[protein]. In terms of biological role, NAD-dependent protein deacetylase which modulates the activities of several enzymes which are inactive in their acetylated form. The protein is NAD-dependent protein deacetylase of Bacillus anthracis.